We begin with the raw amino-acid sequence, 405 residues long: MNRTKTVNWKRNLFITWIGCFFVGSSFSLVMPFLPLYIQGLGVSGGNVELYSGLAFSLPALASGLVAPIWGRLADEHGRKVMMVRASIVMTLTMGGIAFAPNVWWLLGLRLLMGFFSGYIPNSTAMIASQAPKDKSGYALGTLATAMVSGTLIGPSLGGLLAEWFGMANVFLIVGALLALATLLTIFFVHENFEPIAKGEMLSSKEIINKVSNKQILFGLLVTTFIIQITSQSIEPFVTLYIKTLTTSTNNLMFISGLIVSAVGLSAMLSSSFLGRLGDKYGSHRLILIGLVFTFIIYLPMAFVQSPLQLGILRFLLGFGTGALTPSVNSLLSKITPKEGVSRIFAYAQMCSNLGMVTGPLVGSAIAGYISYRAAIVGTSLFVIVNIIWSFINFRKYLRKRSIME.

12 consecutive transmembrane segments (helical) span residues 13 to 33 (LFIT…VMPF), 50 to 70 (LYSG…APIW), 88 to 108 (IVMT…WLLG), 111 to 131 (LLMG…ASQA), 147 to 167 (MVSG…WFGM), 170 to 190 (VFLI…FFVH), 216 to 236 (ILFG…SIEP), 254 to 274 (FISG…SSFL), 286 to 306 (LILI…FVQS), 308 to 328 (LQLG…TPSV), 350 to 370 (MCSN…AGYI), and 374 to 394 (AAIV…FINF).

This sequence belongs to the major facilitator superfamily. TCR/Tet family.

Its subcellular location is the cell membrane. Its function is as follows. Efflux pump for various substrates. The protein is Multi-drug resistance efflux pump PmrA homolog (pmrA) of Lactococcus lactis subsp. lactis (strain IL1403) (Streptococcus lactis).